A 302-amino-acid polypeptide reads, in one-letter code: Acetaldehyde dehydrogenase 1 (302 aa).

12–15 (SGNI) serves as a coordination point for NAD(+). Cys127 acts as the Acyl-thioester intermediate in catalysis. NAD(+) contacts are provided by residues 158 to 166 (SAGPGTRAN) and Asn277.

Belongs to the acetaldehyde dehydrogenase family.

It carries out the reaction acetaldehyde + NAD(+) + CoA = acetyl-CoA + NADH + H(+). In Mycobacteroides abscessus (strain ATCC 19977 / DSM 44196 / CCUG 20993 / CIP 104536 / JCM 13569 / NCTC 13031 / TMC 1543 / L948) (Mycobacterium abscessus), this protein is Acetaldehyde dehydrogenase 1.